The following is a 452-amino-acid chain: Imidazoleglycerol-phosphate dehydratase (452 aa).

The tract at residues 1 to 233 (MASPVQALLL…VGASVVLTPG (233 aa)) is unknown activity. Positions 234–452 (LGELLDLVPA…GVPSTKGVLA (219 aa)) are imidazoleglycerol-phosphate dehydratase.

It belongs to the imidazoleglycerol-phosphate dehydratase family.

The enzyme catalyses D-erythro-1-(imidazol-4-yl)glycerol 3-phosphate = 3-(imidazol-4-yl)-2-oxopropyl phosphate + H2O. It participates in amino-acid biosynthesis; L-histidine biosynthesis; L-histidine from 5-phospho-alpha-D-ribose 1-diphosphate: step 6/9. The polypeptide is Imidazoleglycerol-phosphate dehydratase (HIS3) (Phytophthora nicotianae (Potato buckeye rot agent)).